Consider the following 543-residue polypeptide: ATP-dependent ubiquitin transferase-like protein Cap2 (543 aa).

An E2-like domain region spans residues 1–159 (MSSAAAVADV…QNCIVAHANG (159 aa)). The For E2-like domain role is filled by Cys-84. A linker domain region spans residues 160–305 (CPLWFITDNE…YLAQRNMPNS (146 aa)). An adenylation plus E1-like domain region spans residues 306-543 (KTLAGKNIAV…RDRECPLCNS (238 aa)). Catalysis depends on for E1-like domain residues Cys-450 and Cys-453.

It in the C-terminal section; belongs to the HesA/MoeB/ThiF family. Forms a Cap2-CdnA complex. A Cap2 dimer is bound on either side by a CdnA monomer.

Functionally, CD-NTase priming component of a CBASS antiviral system. CBASS (cyclic oligonucleotide-based antiphage signaling system) provides immunity against bacteriophages. The CD-NTase protein (CdnA) synthesizes cyclic nucleotides in response to infection; these serve as specific second messenger signals. The signals activate a diverse range of effectors, leading to bacterial cell death and thus abortive phage infection. A type II-A(GA) CBASS system. In terms of biological role, acts as a protein transferase, conjugating CdnA, the CD-NTase, to unidentified target(s) in the cell probably via an E1-E2 ubiquitin transferase-like mechanism. This primes CdnA, upon phage infection CdnA activates and makes cyclic nucleotides. Protein conjugation requires ATP. The capV-cdnA-cap2-cap3 operon provides about 10(4)-fold protection in strain BWHPSA011 against infection by phage PaMx41. In P.aeruginosa strain PAO1 it confers protection against phages PaMx41 and JBD18 but not JBD67 (JBD18 and JBD67 do not replicate in BWHPSA011 / Pa011). When acb2 in JBD67 is deleted this CBASS operon then protects against JDB67 also. This CBASS system limits prophage induction of lysogenized JBD67 as well as viral lytic replication. The sequence is that of ATP-dependent ubiquitin transferase-like protein Cap2 from Pseudomonas aeruginosa (strain BWHPSA011 / Pa011).